A 598-amino-acid polypeptide reads, in one-letter code: Elongation factor 4 (598 aa).

The tr-type G domain maps to Lys-2 to Glu-184. GTP is bound by residues Asp-14–Thr-19 and Asn-131–Asp-134.

The protein belongs to the TRAFAC class translation factor GTPase superfamily. Classic translation factor GTPase family. LepA subfamily.

It localises to the cell inner membrane. The catalysed reaction is GTP + H2O = GDP + phosphate + H(+). In terms of biological role, required for accurate and efficient protein synthesis under certain stress conditions. May act as a fidelity factor of the translation reaction, by catalyzing a one-codon backward translocation of tRNAs on improperly translocated ribosomes. Back-translocation proceeds from a post-translocation (POST) complex to a pre-translocation (PRE) complex, thus giving elongation factor G a second chance to translocate the tRNAs correctly. Binds to ribosomes in a GTP-dependent manner. This chain is Elongation factor 4, found in Proteus mirabilis (strain HI4320).